The primary structure comprises 75 residues: Penaeidin-3k (75 aa).

Residues 1-19 form the signal peptide; the sequence is MRLVVCLVFLASFALVCQG. Q20 is subject to Pyrrolidone carboxylic acid. Intrachain disulfides connect C44–C59, C48–C66, and C60–C67. S74 is subject to Serine amide.

The protein belongs to the penaeidin family.

Its subcellular location is the cytoplasmic granule. Antibacterial and antifungal activity. Presents chitin-binding activity. This is Penaeidin-3k from Penaeus setiferus (Atlantic white shrimp).